Here is a 101-residue protein sequence, read N- to C-terminus: Protein RADIALIS-like 2 (101 aa).

The SANT domain occupies 9 to 64 (YGSGSWTVKQNKAFERALAVYDQDTPDRWHNVARAVGGKTPEEAKRQYDLLVRDIE). Positions 69-101 (GHVPFPDYKTTTGNSNRGRLRDEEKRMRSMKLQ) are disordered.

Expressed in the funiculus of ovules and in embryos. In young ovules, expression is observed in the adaxial side of the funiculus (the stalk connecting the embryo sac to the placenta). Also expressed in heart-stage embryos, in the cortex and endodermis of the hypocotyl region but not in the cotyledons, shoot and root apical meristems, provasculature or epidermis. Not detected in young seedlings, mature roots or in young floral primordia.

It is found in the nucleus. In terms of biological role, probable transcription factor. Required for female gametophyte development. The sequence is that of Protein RADIALIS-like 2 (RL2) from Arabidopsis thaliana (Mouse-ear cress).